A 216-amino-acid chain; its full sequence is Phosphatidylserine decarboxylase proenzyme (216 aa).

Serine 183 acts as the Schiff-base intermediate with substrate; via pyruvic acid in catalysis. A Pyruvic acid (Ser); by autocatalysis modification is found at serine 183.

It belongs to the phosphatidylserine decarboxylase family. PSD-A subfamily. Heterodimer of a large membrane-associated beta subunit and a small pyruvoyl-containing alpha subunit. Pyruvate serves as cofactor. Is synthesized initially as an inactive proenzyme. Formation of the active enzyme involves a self-maturation process in which the active site pyruvoyl group is generated from an internal serine residue via an autocatalytic post-translational modification. Two non-identical subunits are generated from the proenzyme in this reaction, and the pyruvate is formed at the N-terminus of the alpha chain, which is derived from the carboxyl end of the proenzyme. The post-translation cleavage follows an unusual pathway, termed non-hydrolytic serinolysis, in which the side chain hydroxyl group of the serine supplies its oxygen atom to form the C-terminus of the beta chain, while the remainder of the serine residue undergoes an oxidative deamination to produce ammonia and the pyruvoyl prosthetic group on the alpha chain.

The protein resides in the cell membrane. It carries out the reaction a 1,2-diacyl-sn-glycero-3-phospho-L-serine + H(+) = a 1,2-diacyl-sn-glycero-3-phosphoethanolamine + CO2. The protein operates within phospholipid metabolism; phosphatidylethanolamine biosynthesis; phosphatidylethanolamine from CDP-diacylglycerol: step 2/2. In terms of biological role, catalyzes the formation of phosphatidylethanolamine (PtdEtn) from phosphatidylserine (PtdSer). The chain is Phosphatidylserine decarboxylase proenzyme from Cupriavidus taiwanensis (strain DSM 17343 / BCRC 17206 / CCUG 44338 / CIP 107171 / LMG 19424 / R1) (Ralstonia taiwanensis (strain LMG 19424)).